Here is a 205-residue protein sequence, read N- to C-terminus: High frequency lysogenization protein HflD homolog (205 aa).

Belongs to the HflD family.

Its subcellular location is the cytoplasm. The protein resides in the cell inner membrane. This is High frequency lysogenization protein HflD homolog from Haemophilus influenzae (strain PittEE).